Consider the following 172-residue polypeptide: Crossover junction endodeoxyribonuclease RuvC (172 aa).

Catalysis depends on residues aspartate 7, glutamate 68, and aspartate 140. Residues aspartate 7, glutamate 68, and aspartate 140 each coordinate Mg(2+).

It belongs to the RuvC family. In terms of assembly, homodimer which binds Holliday junction (HJ) DNA. The HJ becomes 2-fold symmetrical on binding to RuvC with unstacked arms; it has a different conformation from HJ DNA in complex with RuvA. In the full resolvosome a probable DNA-RuvA(4)-RuvB(12)-RuvC(2) complex forms which resolves the HJ. Mg(2+) serves as cofactor.

It localises to the cytoplasm. It catalyses the reaction Endonucleolytic cleavage at a junction such as a reciprocal single-stranded crossover between two homologous DNA duplexes (Holliday junction).. In terms of biological role, the RuvA-RuvB-RuvC complex processes Holliday junction (HJ) DNA during genetic recombination and DNA repair. Endonuclease that resolves HJ intermediates. Cleaves cruciform DNA by making single-stranded nicks across the HJ at symmetrical positions within the homologous arms, yielding a 5'-phosphate and a 3'-hydroxyl group; requires a central core of homology in the junction. The consensus cleavage sequence is 5'-(A/T)TT(C/G)-3'. Cleavage occurs on the 3'-side of the TT dinucleotide at the point of strand exchange. HJ branch migration catalyzed by RuvA-RuvB allows RuvC to scan DNA until it finds its consensus sequence, where it cleaves and resolves the cruciform DNA. This chain is Crossover junction endodeoxyribonuclease RuvC, found in Polynucleobacter asymbioticus (strain DSM 18221 / CIP 109841 / QLW-P1DMWA-1) (Polynucleobacter necessarius subsp. asymbioticus).